Here is a 285-residue protein sequence, read N- to C-terminus: Elongation factor Ts (285 aa).

The involved in Mg(2+) ion dislocation from EF-Tu stretch occupies residues T82–V85.

The protein belongs to the EF-Ts family.

The protein localises to the cytoplasm. Its function is as follows. Associates with the EF-Tu.GDP complex and induces the exchange of GDP to GTP. It remains bound to the aminoacyl-tRNA.EF-Tu.GTP complex up to the GTP hydrolysis stage on the ribosome. This chain is Elongation factor Ts, found in Yersinia pseudotuberculosis serotype O:1b (strain IP 31758).